A 45-amino-acid polypeptide reads, in one-letter code: MTQRTLGGTNRKQKRTSGFRARMRKSNGRKVIQARRKKGRHRLSV.

The segment covering 1–10 (MTQRTLGGTN) has biased composition (polar residues). The segment at 1–45 (MTQRTLGGTNRKQKRTSGFRARMRKSNGRKVIQARRKKGRHRLSV) is disordered. Positions 11-45 (RKQKRTSGFRARMRKSNGRKVIQARRKKGRHRLSV) are enriched in basic residues.

The protein belongs to the bacterial ribosomal protein bL34 family.

The protein is Large ribosomal subunit protein bL34 of Crocosphaera subtropica (strain ATCC 51142 / BH68) (Cyanothece sp. (strain ATCC 51142)).